A 309-amino-acid chain; its full sequence is Ribose-phosphate pyrophosphokinase (309 aa).

ATP is bound by residues 42-44 (DEE) and 102-103 (RQ). His-136 and Asp-175 together coordinate Mg(2+). Lys-199 is a catalytic residue. D-ribose 5-phosphate is bound by residues Arg-201, Asp-226, and 230–234 (STGGT).

Belongs to the ribose-phosphate pyrophosphokinase family. Class III (archaeal) subfamily. Mg(2+) serves as cofactor.

The protein resides in the cytoplasm. It carries out the reaction D-ribose 5-phosphate + ATP = 5-phospho-alpha-D-ribose 1-diphosphate + AMP + H(+). It participates in metabolic intermediate biosynthesis; 5-phospho-alpha-D-ribose 1-diphosphate biosynthesis; 5-phospho-alpha-D-ribose 1-diphosphate from D-ribose 5-phosphate (route I): step 1/1. Its function is as follows. Involved in the biosynthesis of the central metabolite phospho-alpha-D-ribosyl-1-pyrophosphate (PRPP) via the transfer of pyrophosphoryl group from ATP to 1-hydroxyl of ribose-5-phosphate (Rib-5-P). This chain is Ribose-phosphate pyrophosphokinase, found in Aeropyrum pernix (strain ATCC 700893 / DSM 11879 / JCM 9820 / NBRC 100138 / K1).